The following is a 692-amino-acid chain: MISKSRRSFIRLAAGTVGATVATSMLPSSIQAALAIPAHRRHGNLKDVEHVVILMQENRSFDHYFGTLKGVRGFGDRMAIPLPDGQRVWHQKGSKGEILPYHFDTSTTSAQRVDGTPHTWPDAQQAWNEGRMDKWLPAKTERSLGYYKEQDIAFQFAMANAFTICDAYHCSFQGGTNPNRLFLWTGTNDPLGQHGGPVTTNDHDSNGPVEQGYTWTTYPERLQAAGITWRVYQDMADNFSDNPLIGFRQYRAAAPDSPLIVNGLSTWKLDALKRDVLANSLPQVSWIVAPAKYSEHPGPSSPIWGAEYTSWVLDALTANPEVWSKTALLVMFDENDGFFDHVAPPAAPSLNKDGTLRGKTTADATLEWHTKGDIRYRNQPYGLGPRVPMYVISPWSKGGWVNSQVFDHTSVIRFLEQRFGVMEPNISPWRRAVCGDLTSAFNFANPNNEPFPELPDTSQADAIVASQIKLPKPKPPAVAAMPKQEMGIRPARALPYELGVHARYRSGGDALSLTFANTGKAGAVFQVFDLLDSENPPKRYTVGARKRLHDSFQGDASGDYHLEVHGPNGFLRVFRGNLRRDLAERKAPLPEVRIDYEPLFGNLRVQLINRGRHPVKLTVKDNVYRQGERRTVNVPPGQRREVRYSLRSSGNWYDFSVSAQGADSFLRRFSGRMEDGRSGFSDPGMGLGTLTF.

The tat-type signal signal peptide spans 1–35 (MISKSRRSFIRLAAGTVGATVATSMLPSSIQAALA).

It belongs to the bacterial phospholipase C family. Post-translationally, predicted to be exported by the Tat system. The position of the signal peptide cleavage has not been experimentally proven.

It catalyses the reaction a 1,2-diacyl-sn-glycero-3-phosphocholine + H2O = phosphocholine + a 1,2-diacyl-sn-glycerol + H(+). Its function is as follows. Hydrolyzes phosphatidylserine as well as phosphatidylcholine. The sequence is that of Non-hemolytic phospholipase C (plcN) from Pseudomonas aeruginosa (strain ATCC 15692 / DSM 22644 / CIP 104116 / JCM 14847 / LMG 12228 / 1C / PRS 101 / PAO1).